The following is a 213-amino-acid chain: Andrastin A biosynthesis cluster protein B (213 aa).

Functionally, part of the gene cluster that mediates the biosynthesis of andrastins, meroterpenoid compounds that exhibit inhibitory activity against ras farnesyltransferase, suggesting that they could be promising leads for antitumor agents. The first step of the pathway is the synthesis of 3,5-dimethylorsellinic acid (DMOA) by the polyketide synthase adrD via condensation of one acetyl-CoA starter unit with 3 malonyl-CoA units and 2 methylations. DMAO is then converted to farnesyl-DMAO by the prenyltransferase adrG. The methyltransferase adrK catalyzes the methylation of the carboxyl group of farnesyl-DMAO to farnesyl-DMAO methyl ester which is further converted to epoxyfarnesyl-DMAO methyl ester by the FAD-dependent monooxygenase adrH. The terpene cyclase adrI then catalyzes the carbon skeletal rearrangement to generate the andrastin E, the first compound in the pathway having the andrastin scaffold, with the tetracyclic ring system. The post-cyclization tailoring enzymes adrF, adrE, adrJ, and adrA, are involved in the conversion of andrastin E into andrastin A. The short chain dehydrogenase adrF is responsible for the oxidation of the C-3 a hydroxyl group of andrastin E to yield the corresponding ketone, andrastin D. The ketoreductase adrE stereoselectively reduces the carbonyl moiety to reverse the stereochemistry of the C-3 position to yield andrastin F. The acetyltransferase adrJ is the acetyltransferase that attaches the acetyl group to the C-3 hydroxyl group of andrastin F to yield andrastin C. Finally, the cytochrome P450 monooxygenase adrA catalyzes two sequential oxidation reactions of the C-23 methyl group, to generate the corresponding alcohol andrastin B, and aldehyde andrastin A. This chain is Andrastin A biosynthesis cluster protein B, found in Penicillium rubens (strain ATCC 28089 / DSM 1075 / NRRL 1951 / Wisconsin 54-1255) (Penicillium chrysogenum).